Reading from the N-terminus, the 888-residue chain is Serine/arginine repetitive matrix protein 1 (888 aa).

The 100-residue stretch at 27–126 folds into the PWI domain; that stretch reads QLKFAECLEK…AGIPTAFLEL (100 aa). The span at 139–169 shows a compositional bias: basic and acidic residues; sequence EKLASMKKQDEDKEKRDKEDKDNREKRDRSR. The tract at residues 139-888 is disordered; that stretch reads EKLASMKKQD…MRKAQVSPPS (750 aa). Positions 170-206 are enriched in basic residues; it reads SPRRRKSRSPSPRRRSSPIRRERKRSHSRSPHHRTKS. Composition is skewed to basic and acidic residues over residues 213-232 and 254-276; these read PEKK…KETV and ETKE…EKTR. Composition is skewed to basic residues over residues 277-325 and 332-347; these read QRSP…RTPP and PRHR…RRRS. Low complexity-rich tracts occupy residues 348 to 364 and 473 to 496; these read SASL…SRSR and SVQQ…SSSS. Composition is skewed to basic residues over residues 528–554 and 561–585; these read PRKR…RRRS and PRRR…RSPS. Residues 586 to 598 show a composition bias toward low complexity; that stretch reads PRRYSPPIQRRYS. 2 stretches are compositionally biased toward basic residues: residues 614 to 629 and 642 to 656; these read PKRR…RRVS and AKRR…HRKG. A compositionally biased stretch (basic and acidic residues) spans 662–677; that stretch reads SNRETRSPPQNKRDSP. 3 stretches are compositionally biased toward low complexity: residues 697–712, 728–749, and 763–775; these read ASAS…PSTR, ASTP…SGSP, and ARSR…WSPA. A compositionally biased stretch (polar residues) spans 780–790; sequence SPTQSPSPARN. The segment covering 798-823 has biased composition (basic residues); that stretch reads KKKKKKKDKKHKKDKKHKKHKKHKKE. The span at 826–843 shows a compositional bias: low complexity; that stretch reads AVAAAPAAVAAADTTSAQ. Residues 866–876 are compositionally biased toward basic and acidic residues; that stretch reads DLEKHLREKAL.

This sequence belongs to the splicing factor SR family.

Its subcellular location is the nucleus. In terms of biological role, involved in pre-mRNA splicing and processing events. In Gallus gallus (Chicken), this protein is Serine/arginine repetitive matrix protein 1 (SRRM1).